The primary structure comprises 195 residues: MEGVDNTNPMLTLEEGENNNPFSSLDDKTLMMMAPSLIFSGDVGPSSSSCTPAGYHLSAQLENFRGGGGEMGGLVSNNSNNSDHNKNCNKGKGKRTLAMQRIAFHTRSDDDVLDDGYRWRKYGQKSVKNNAHPRSYYRCTYHTCNVKKQVQRLAKDPNVVVTTYEGVHNHPCEKLMETLSPLLRQLQFLSRVSDL.

Polar residues predominate over residues 1–10; sequence MEGVDNTNPM. 2 disordered regions span residues 1–20 and 70–93; these read MEGVDNTNPMLTLEEGENNN and EMGGLVSNNSNNSDHNKNCNKGKG. The WRKY DNA-binding region spans 108–173; it reads SDDDVLDDGY…YEGVHNHPCE (66 aa).

It belongs to the WRKY group II-c family.

Its subcellular location is the nucleus. Transcription factor. Interacts specifically with the W box (5'-(T)TGAC[CT]-3'), a frequently occurring elicitor-responsive cis-acting element. This is Probable WRKY transcription factor 56 (WRKY56) from Arabidopsis thaliana (Mouse-ear cress).